Consider the following 110-residue polypeptide: Small ribosomal subunit protein bS16 (110 aa).

The interval 84 to 110 is disordered; it reads KREARNNPEKAVPRKERKAAAEAAAKK.

It belongs to the bacterial ribosomal protein bS16 family.

The protein is Small ribosomal subunit protein bS16 of Rhodopseudomonas palustris (strain BisB18).